A 107-amino-acid chain; its full sequence is UPF0213 protein SG0387 (107 aa).

Positions 4 to 79 (SLWHLYLIRT…KQLSRAQKEH (76 aa)) constitute a GIY-YIG domain.

The protein belongs to the UPF0213 family.

In Sodalis glossinidius (strain morsitans), this protein is UPF0213 protein SG0387.